The following is a 270-amino-acid chain: tRNA pseudouridine synthase A (270 aa).

D60 serves as the catalytic Nucleophile. Y118 is a substrate binding site.

The protein belongs to the tRNA pseudouridine synthase TruA family. Homodimer.

It catalyses the reaction uridine(38/39/40) in tRNA = pseudouridine(38/39/40) in tRNA. Formation of pseudouridine at positions 38, 39 and 40 in the anticodon stem and loop of transfer RNAs. This Salmonella typhimurium (strain LT2 / SGSC1412 / ATCC 700720) protein is tRNA pseudouridine synthase A.